A 238-amino-acid polypeptide reads, in one-letter code: Zinc finger protein ZAT6 (238 aa).

Polar residues predominate over residues 1–15 (MALETLTSPRLSSPM). Positions 1-42 (MALETLTSPRLSSPMPTLFQDSALGFHGSKGKRSKRSRSEFD) are disordered. A Nuclear localization signal motif is present at residues 30-38 (KGKRSKRSR). C2H2-type zinc fingers lie at residues 89 to 111 (YKCS…KASH) and 148 to 170 (HVCS…KRCH). The disordered stretch occupies residues 175-202 (NGGGVSSSVSNSEDVGSTSHVSSGHRGF). A compositionally biased stretch (low complexity) spans 180–193 (SSSVSNSEDVGSTS).

It is found in the nucleus. Its function is as follows. Probable transcription factor that regulates root development and phosphate (Pi) acquisition and homeostasis. Probably acts as a repressor of primary root growth and regulates Pi homeostasis through the control of root architecture. This is Zinc finger protein ZAT6 (ZAT6) from Arabidopsis thaliana (Mouse-ear cress).